A 23-amino-acid polypeptide reads, in one-letter code: SHLFQPSLVLDMAKVLLDNYXFP.

The protein localises to the secreted. The protein resides in the extracellular space. It is found in the extracellular matrix. Its subcellular location is the interphotoreceptor matrix. In terms of biological role, IRBP shuttles 11-cis and all trans retinoids between the retinol isomerase in the pigment epithelium and the visual pigments in the photoreceptor cells of the retina. This Oryctolagus cuniculus (Rabbit) protein is Retinol-binding protein 3 (RBP3).